Here is a 145-residue protein sequence, read N- to C-terminus: MIALIQRVSRASVVVDNQTIGAIDKGLLVLLGVEREDNREKMEKLATKVMSYRVFSDENGKMNLNLTQAGGSLLVVSQFTLAADTGRGLRPSFSGAGTPEQALGLYEEFVAFCRAQGVTTETGQFGADMKVELVNDGPVTFNLQV.

The short motif at 137–138 is the Gly-cisPro motif, important for rejection of L-amino acids element; sequence GP.

This sequence belongs to the DTD family. As to quaternary structure, homodimer.

It localises to the cytoplasm. It catalyses the reaction glycyl-tRNA(Ala) + H2O = tRNA(Ala) + glycine + H(+). It carries out the reaction a D-aminoacyl-tRNA + H2O = a tRNA + a D-alpha-amino acid + H(+). An aminoacyl-tRNA editing enzyme that deacylates mischarged D-aminoacyl-tRNAs. Also deacylates mischarged glycyl-tRNA(Ala), protecting cells against glycine mischarging by AlaRS. Acts via tRNA-based rather than protein-based catalysis; rejects L-amino acids rather than detecting D-amino acids in the active site. By recycling D-aminoacyl-tRNA to D-amino acids and free tRNA molecules, this enzyme counteracts the toxicity associated with the formation of D-aminoacyl-tRNA entities in vivo and helps enforce protein L-homochirality. This chain is D-aminoacyl-tRNA deacylase, found in Shewanella sp. (strain MR-4).